We begin with the raw amino-acid sequence, 264 residues long: MMWNYFVTCIVLYANIISIHTFGLTGGNNLNQALGLTGGNPLDSTLGLSAGNAFPSGMGAMQIPAYLRMAPSVETICSTQSPLLNPRERNGLLSDLVGKEISRRSRFLAANPSLAGTGKWACAANYYSNVMRYRPNELGNVFGDLIDSTGCDGFTCDMVRGVRKTSPMSNFLNAMMISQMMQQPNAAQVPTTSQQQPTSNTGGQQPPTNASNPPTNPQPTPTPAQPTPSGTQVQQTPAANNGLDLTSMFNNPAFQEQLMRLVST.

An N-terminal signal peptide occupies residues 1 to 21 (MMWNYFVTCIVLYANIISIHT). The disordered stretch occupies residues 182-247 (QQPNAAQVPT…AANNGLDLTS (66 aa)). A compositionally biased stretch (low complexity) spans 190-213 (PTTSQQQPTSNTGGQQPPTNASNP). An N-linked (GlcNAc...) asparagine glycan is attached at N209. The span at 214–226 (PTNPQPTPTPAQP) shows a compositional bias: pro residues. Over residues 230-247 (GTQVQQTPAANNGLDLTS) the composition is skewed to polar residues.

In terms of tissue distribution, component of the acid-insoluble and acid-soluble organic matrix of calcified layers of the shell (at protein level).

It is found in the secreted. This is an uncharacterized protein from Lottia gigantea (Giant owl limpet).